A 459-amino-acid polypeptide reads, in one-letter code: Interleukin-7 receptor subunit alpha (459 aa).

Positions 1–20 (MTILGTTFGVFFSLLQVVSG) are cleaved as a signal peptide. At 21–241 (ESGYAQNGDL…NNHSGETNPT (221 aa)) the chain is on the extracellular side. The cysteines at positions 42 and 57 are disulfide-linked. N-linked (GlcNAc...) asparagine glycosylation is found at Asn49 and Asn65. 2 disulfide bridges follow: Cys74–Cys82 and Cys108–Cys118. Positions 131 to 231 (APFDLSVIYR…PSYYFRTPEI (101 aa)) constitute a Fibronectin type-III domain. N-linked (GlcNAc...) asparagine glycosylation occurs at Asn182. The short motif at 217–221 (WSEWS) is the WSXWS motif element. The chain crosses the membrane as a helical span at residues 242 to 262 (LLTISILSVLSVVLLVILACV). The Cytoplasmic portion of the chain corresponds to 263-459 (LWKKRIKPII…VTMSSFCQKR (197 aa)). The Box 1 motif motif lies at 272–280 (IWPSLPDHK). Residue Thr282 is modified to Phosphothreonine; by PKC. The tract at residues 327–357 (TVPPQLEESETQRPGGDVQSPSWPSENVVTT) is disordered. Residues 345–357 (QSPSWPSENVVTT) are compositionally biased toward polar residues.

This sequence belongs to the type I cytokine receptor family. Type 4 subfamily. In terms of assembly, the IL7 receptor is a heterodimer of IL7R and IL2RG. The TSLP receptor is a heterodimer of CRLF2 and IL7R. Interacts with CD53. In terms of processing, N-glycosylated IL-7Ralpha binds IL7 300-fold more tightly than the unglycosylated form. Ubiquitinated by MARCHF8; leading to lysosomal degradation.

It is found in the cell membrane. In terms of biological role, receptor for interleukin-7. Also acts as a receptor for thymic stromal lymphopoietin (TSLP). The sequence is that of Interleukin-7 receptor subunit alpha (IL7R) from Callithrix jacchus (White-tufted-ear marmoset).